Reading from the N-terminus, the 712-residue chain is Ribosomal RNA large subunit methyltransferase K/L (712 aa).

The region spanning 42-153 is the THUMP domain; the sequence is QALRIVMWSR…KGRASLSIDL (112 aa).

It belongs to the methyltransferase superfamily. RlmKL family.

It is found in the cytoplasm. The enzyme catalyses guanosine(2445) in 23S rRNA + S-adenosyl-L-methionine = N(2)-methylguanosine(2445) in 23S rRNA + S-adenosyl-L-homocysteine + H(+). It carries out the reaction guanosine(2069) in 23S rRNA + S-adenosyl-L-methionine = N(2)-methylguanosine(2069) in 23S rRNA + S-adenosyl-L-homocysteine + H(+). Specifically methylates the guanine in position 2445 (m2G2445) and the guanine in position 2069 (m7G2069) of 23S rRNA. The chain is Ribosomal RNA large subunit methyltransferase K/L from Stenotrophomonas maltophilia (strain K279a).